The following is a 255-amino-acid chain: Electron transfer flavoprotein subunit beta (255 aa).

Residue alanine 2 is modified to N-acetylalanine. Residues alanine 9, 39–42 (NPFC), cysteine 66, and 123–134 (GKQAIDDDCNQT) contribute to the AMP site. Residues 183-205 (ADLRLNEPRYATLPNIMKAKKKK) form a recognition loop region. The residue at position 200 (lysine 200) is an N6,N6,N6-trimethyllysine; by ETFBKMT; alternate. An N6-acetyllysine; alternate modification is found at lysine 200. N6-methyllysine; alternate is present on lysine 200. Lysine 203 is modified (N6,N6,N6-trimethyllysine; by ETFBKMT). Lysine 210 bears the N6-acetyllysine; alternate mark. Position 210 is an N6-succinyllysine; alternate (lysine 210). A phosphoserine mark is found at serine 223 and serine 226. An N6-acetyllysine modification is found at lysine 238. At lysine 248 the chain carries N6-acetyllysine; alternate. Lysine 248 is modified (N6-succinyllysine; alternate).

This sequence belongs to the ETF beta-subunit/FixA family. As to quaternary structure, heterodimer composed of ETFA and ETFB. Identified in a complex that contains ETFA, ETFB and ETFRF1. Interacts with ACADM. In terms of processing, methylated. Trimethylation at Lys-200 and Lys-203 may negatively regulate the activity in electron transfer from acyl-CoA dehydrogenases.

The protein resides in the mitochondrion matrix. Its function is as follows. Heterodimeric electron transfer flavoprotein that accepts electrons from several mitochondrial dehydrogenases, including acyl-CoA dehydrogenases, glutaryl-CoA and sarcosine dehydrogenase. It transfers the electrons to the main mitochondrial respiratory chain via ETF-ubiquinone oxidoreductase. Required for normal mitochondrial fatty acid oxidation and normal amino acid metabolism. ETFB binds an AMP molecule that probably has a purely structural role. The sequence is that of Electron transfer flavoprotein subunit beta from Sus scrofa (Pig).